A 508-amino-acid polypeptide reads, in one-letter code: Steroid 17-alpha-hydroxylase/17,20 lyase (508 aa).

A heme-binding site is contributed by cysteine 445.

Belongs to the cytochrome P450 family. It depends on heme as a cofactor.

The protein localises to the membrane. It catalyses the reaction a C21-steroid + reduced [NADPH--hemoprotein reductase] + O2 = a 17alpha-hydroxy-C21-steroid + oxidized [NADPH--hemoprotein reductase] + H2O + H(+). The catalysed reaction is 17alpha-hydroxyprogesterone + reduced [NADPH--hemoprotein reductase] + O2 = androst-4-ene-3,17-dione + acetate + oxidized [NADPH--hemoprotein reductase] + H2O + 2 H(+). It carries out the reaction 17alpha-hydroxypregnenolone + reduced [NADPH--hemoprotein reductase] + O2 = 3beta-hydroxyandrost-5-en-17-one + acetate + oxidized [NADPH--hemoprotein reductase] + H2O + 2 H(+). The protein operates within lipid metabolism; steroid biosynthesis. Functionally, conversion of pregnenolone and progesterone to their 17-alpha-hydroxylated products and subsequently to dehydroepiandrosterone (DHEA) and androstenedione. Catalyzes both the 17-alpha-hydroxylation and the 17,20-lyase reaction. The protein is Steroid 17-alpha-hydroxylase/17,20 lyase (CYP17A1) of Gallus gallus (Chicken).